The chain runs to 299 residues: Recombination-associated protein RdgC (299 aa).

The protein belongs to the RdgC family.

It localises to the cytoplasm. The protein localises to the nucleoid. Its function is as follows. May be involved in recombination. The polypeptide is Recombination-associated protein RdgC (Cupriavidus necator (strain ATCC 17699 / DSM 428 / KCTC 22496 / NCIMB 10442 / H16 / Stanier 337) (Ralstonia eutropha)).